The following is a 493-amino-acid chain: Galactose-1-phosphate uridylyltransferase (493 aa).

It belongs to the galactose-1-phosphate uridylyltransferase type 2 family.

Its subcellular location is the cytoplasm. It catalyses the reaction alpha-D-galactose 1-phosphate + UDP-alpha-D-glucose = alpha-D-glucose 1-phosphate + UDP-alpha-D-galactose. The protein operates within carbohydrate metabolism; galactose metabolism. This Streptococcus thermophilus protein is Galactose-1-phosphate uridylyltransferase (galT).